The primary structure comprises 351 residues: Prostaglandin reductase 2 (351 aa).

A substrate-binding site is contributed by 99–100 (FY). NADP(+)-binding positions include 165-168 (GACG), lysine 192, tyrosine 208, asparagine 231, 253-259 (CGQISQY), 287-289 (FLV), and asparagine 337. Residue 288–290 (LVL) participates in substrate binding.

This sequence belongs to the NADP-dependent oxidoreductase L4BD family. Monomer. In terms of tissue distribution, widely expressed.

It localises to the cytoplasm. It catalyses the reaction 13,14-dihydro-15-oxo-prostaglandin E2 + NAD(+) = 15-oxoprostaglandin E2 + NADH + H(+). The enzyme catalyses 13,14-dihydro-15-oxo-prostaglandin E2 + NADP(+) = 15-oxoprostaglandin E2 + NADPH + H(+). It carries out the reaction 13,14-dihydro-15-oxo-PGF2alpha + NADP(+) = 15-oxoprostaglandin F2alpha + NADPH + H(+). The catalysed reaction is 13,14-dihydro-15-oxo-prostaglandin E1 + NADP(+) = 15-oxoprostaglandin E1 + NADPH + H(+). It catalyses the reaction 13,14-dihydro-15-oxo-prostaglandin F1alpha + NADP(+) = 15-oxoprostaglandin F1alpha + NADPH + H(+). Functions as 15-oxo-prostaglandin 13-reductase and acts on 15-keto-PGE1, 15-keto-PGE2, 15-keto-PGE1-alpha and 15-keto-PGE2-alpha with highest activity towards 15-keto-PGE2. Overexpression represses transcriptional activity of PPARG and inhibits adipocyte differentiation. This chain is Prostaglandin reductase 2, found in Homo sapiens (Human).